The chain runs to 295 residues: Pyridoxal 5'-phosphate synthase subunit PdxS (295 aa).

Asp-25 is a binding site for D-ribose 5-phosphate. Catalysis depends on Lys-82, which acts as the Schiff-base intermediate with D-ribose 5-phosphate. Position 154 (Gly-154) interacts with D-ribose 5-phosphate. Arg-166 contacts D-glyceraldehyde 3-phosphate. Residues Gly-215 and 236-237 (GS) each bind D-ribose 5-phosphate.

It belongs to the PdxS/SNZ family. In the presence of PdxT, forms a dodecamer of heterodimers.

It carries out the reaction aldehydo-D-ribose 5-phosphate + D-glyceraldehyde 3-phosphate + L-glutamine = pyridoxal 5'-phosphate + L-glutamate + phosphate + 3 H2O + H(+). It functions in the pathway cofactor biosynthesis; pyridoxal 5'-phosphate biosynthesis. Its function is as follows. Catalyzes the formation of pyridoxal 5'-phosphate from ribose 5-phosphate (RBP), glyceraldehyde 3-phosphate (G3P) and ammonia. The ammonia is provided by the PdxT subunit. Can also use ribulose 5-phosphate and dihydroxyacetone phosphate as substrates, resulting from enzyme-catalyzed isomerization of RBP and G3P, respectively. This Oceanobacillus iheyensis (strain DSM 14371 / CIP 107618 / JCM 11309 / KCTC 3954 / HTE831) protein is Pyridoxal 5'-phosphate synthase subunit PdxS.